Reading from the N-terminus, the 394-residue chain is Subtilisin-like protease 4 (394 aa).

A signal peptide spans 1-17 (CLKTLSVFLAAFAAADA). Residues 18–116 (RAVFKTQGHK…VEQDQVVRIS (99 aa)) constitute a propeptide that is removed on maturation. The region spanning 36–115 (YIVVMKDGVS…YVEQDQVVRI (80 aa)) is the Inhibitor I9 domain. N100 carries N-linked (GlcNAc...) asparagine glycosylation. The Peptidase S8 domain occupies 126-394 (SWGLGRVSHR…STTNRLLYNG (269 aa)). Residues D158 and H189 each act as charge relay system in the active site. N-linked (GlcNAc...) asparagine glycans are attached at residues N250 and N306. The active-site Charge relay system is S344.

This sequence belongs to the peptidase S8 family.

Its subcellular location is the secreted. Secreted subtilisin-like serine protease with keratinolytic activity that contributes to pathogenicity. The protein is Subtilisin-like protease 4 (SUB4) of Trichophyton equinum (Horse ringworm fungus).